The primary structure comprises 153 residues: Phosphoribosyl-AMP cyclohydrolase (153 aa).

Mg(2+) is bound at residue aspartate 93. Cysteine 94 contributes to the Zn(2+) binding site. Mg(2+)-binding residues include aspartate 95 and aspartate 97. 2 residues coordinate Zn(2+): cysteine 112 and cysteine 119.

It belongs to the PRA-CH family. Homodimer. Mg(2+) is required as a cofactor. It depends on Zn(2+) as a cofactor.

It localises to the cytoplasm. It catalyses the reaction 1-(5-phospho-beta-D-ribosyl)-5'-AMP + H2O = 1-(5-phospho-beta-D-ribosyl)-5-[(5-phospho-beta-D-ribosylamino)methylideneamino]imidazole-4-carboxamide. It participates in amino-acid biosynthesis; L-histidine biosynthesis; L-histidine from 5-phospho-alpha-D-ribose 1-diphosphate: step 3/9. Functionally, catalyzes the hydrolysis of the adenine ring of phosphoribosyl-AMP. The chain is Phosphoribosyl-AMP cyclohydrolase from Mesorhizobium japonicum (strain LMG 29417 / CECT 9101 / MAFF 303099) (Mesorhizobium loti (strain MAFF 303099)).